The following is a 518-amino-acid chain: Protein nucleotidyltransferase YdiU (518 aa).

Residues 1–10 (MTHLRFDNRL) show a composition bias toward basic and acidic residues. The interval 1 to 23 (MTHLRFDNRLRQQLPGDPEEGSR) is disordered. 8 residues coordinate ATP: Gly100, Gly102, Arg103, Lys123, Asp135, Gly136, Arg193, and Arg200. Asp270 (proton acceptor) is an active-site residue. Mg(2+) contacts are provided by Asn271 and Asp280. Asp280 is an ATP binding site.

It belongs to the SELO family. Requires Mg(2+) as cofactor. Mn(2+) is required as a cofactor.

The catalysed reaction is L-seryl-[protein] + ATP = 3-O-(5'-adenylyl)-L-seryl-[protein] + diphosphate. It carries out the reaction L-threonyl-[protein] + ATP = 3-O-(5'-adenylyl)-L-threonyl-[protein] + diphosphate. The enzyme catalyses L-tyrosyl-[protein] + ATP = O-(5'-adenylyl)-L-tyrosyl-[protein] + diphosphate. It catalyses the reaction L-histidyl-[protein] + UTP = N(tele)-(5'-uridylyl)-L-histidyl-[protein] + diphosphate. The catalysed reaction is L-seryl-[protein] + UTP = O-(5'-uridylyl)-L-seryl-[protein] + diphosphate. It carries out the reaction L-tyrosyl-[protein] + UTP = O-(5'-uridylyl)-L-tyrosyl-[protein] + diphosphate. Its function is as follows. Nucleotidyltransferase involved in the post-translational modification of proteins. It can catalyze the addition of adenosine monophosphate (AMP) or uridine monophosphate (UMP) to a protein, resulting in modifications known as AMPylation and UMPylation. The chain is Protein nucleotidyltransferase YdiU from Xanthomonas axonopodis pv. citri (strain 306).